Here is a 486-residue protein sequence, read N- to C-terminus: Alliin lyase 1 (486 aa).

An N-terminal signal peptide occupies residues 1–28 (MVESYKKIGSCNKMPCLVILTCIIMSNS). A propeptide spanning residues 29-38 (LVNNNNMVQA) is cleaved from the precursor. Residues 51–97 (EAVANINCSEHGRAFLDGIISEGSPKCECNTCYTGPDCSEKIQGCSA) enclose the EGF-like; atypical domain. N-linked (GlcNAc...) asparagine glycosylation occurs at Asn-57. 3 cysteine pairs are disulfide-bonded: Cys-58–Cys-77, Cys-79–Cys-88, and Cys-82–Cys-95. Residue 130 to 138 (YFFNPVSNF) coordinates chloride. Asn-184 and Asn-229 each carry an N-linked (GlcNAc...) asparagine glycan. N6-(pyridoxal phosphate)lysine is present on Lys-289. A glycan (N-linked (GlcNAc...) asparagine) is linked at Asn-366. Cys-406 and Cys-414 are disulfide-bonded.

It belongs to the alliinase family. In terms of assembly, homodimer. Pyridoxal 5'-phosphate serves as cofactor. Expressed in bulb (at protein level). Expressed in shoots.

It localises to the vacuole. It carries out the reaction an S-alkyl-L-cysteine S-oxide = an S-alkyl sulfenate + 2-aminoprop-2-enoate. In terms of biological role, able to cleave the C-S bond of sulfoxide derivatives of Cys to produce allicin, thus giving rise to all sulfur compounds which are responsible for most of the properties of garlic, such as the specific smell and flavor as well as the health benefits like blood lipid or blood pressure lowering. This Allium sativum (Garlic) protein is Alliin lyase 1.